The chain runs to 571 residues: Cerebral cavernous malformations 2 protein-like (571 aa).

3 disordered regions span residues 164–193, 212–295, and 544–571; these read AGVD…GTAE, AEAR…PQDP, and LAPD…DNYL. Over residues 184-193 the composition is skewed to basic and acidic residues; that stretch reads PEKRRVGTAE. Over residues 212–223 the composition is skewed to gly residues; sequence AEARAGGGGGGS. Basic and acidic residues predominate over residues 237–251; sequence WERRQTFSGSWERRH. Residues 253 to 264 show a composition bias toward gly residues; sequence GGGGGGGAGKPG. Residues 286–295 show a composition bias toward pro residues; the sequence is GPNPLDPQDP. The segment covering 545–555 has biased composition (acidic residues); that stretch reads APDDDDDDEDE.

Belongs to the CCM2 family.

The sequence is that of Cerebral cavernous malformations 2 protein-like (CCM2L) from Homo sapiens (Human).